Reading from the N-terminus, the 437-residue chain is GTPase Der (437 aa).

EngA-type G domains are found at residues 3–167 (NLVA…SKEG) and 176–352 (PRFA…QART). GTP contacts are provided by residues 9 to 16 (GRPNVGKS), 56 to 60 (DTGGW), 119 to 122 (NKTD), 182 to 189 (GRPNAGKS), 229 to 233 (DTAGI), and 294 to 297 (NKWD). Residues 353–437 (TRIPTARLNE…TPINIFIRQK (85 aa)) enclose the KH-like domain.

This sequence belongs to the TRAFAC class TrmE-Era-EngA-EngB-Septin-like GTPase superfamily. EngA (Der) GTPase family. In terms of assembly, associates with the 50S ribosomal subunit.

In terms of biological role, GTPase that plays an essential role in the late steps of ribosome biogenesis. The sequence is that of GTPase Der from Phocaeicola vulgatus (strain ATCC 8482 / DSM 1447 / JCM 5826 / CCUG 4940 / NBRC 14291 / NCTC 11154) (Bacteroides vulgatus).